The primary structure comprises 447 residues: MIKIYDTMTRSLRKFVPLTENTVNIYVCGPTVYNYIHIGNARSAVAFDTIRRYFEYTGYQVNYISNFTDVDDKIIKAATQAGVSPKELSDRFIAAFIEDTKALGVKPATQNPRVMDYIAEIISFVESLIEKDFAYEADGDVYFRVEKSEHYAKLANKTLSELEVGASGRTDAETALKENPLDFALWKSAKAGEVSWDSPWGFGRPGWHIECSVMATEILGDTIDIHGGGADLEFPHHTNEIAQSEAKTGKTFANYWMHNGFVTVDNEKMSKSLGNFVTVHDMLQTVDGQVLRFFLATQQYRKPINFTEKTIHDAEINLKYLKNTLQQPLTETADEQELKQFVIAFQDAMDDDFNTANGITVVFDMAKWINSGSYTEPVKSAFEKMLAVFGIIFEEEVLEVDIEALIAKRQEARANRDFATADAIRDQLAVQGIKLLDTKDGVRWLRD.

Cys28 contacts Zn(2+). The 'HIGH' region signature appears at 30–40; it reads PTVYNYIHIGN. Zn(2+)-binding residues include Cys211, His236, and Glu240. The 'KMSKS' region motif lies at 268–272; sequence KMSKS. Lys271 contacts ATP.

Belongs to the class-I aminoacyl-tRNA synthetase family. Monomer. The cofactor is Zn(2+).

It is found in the cytoplasm. It carries out the reaction tRNA(Cys) + L-cysteine + ATP = L-cysteinyl-tRNA(Cys) + AMP + diphosphate. The chain is Cysteine--tRNA ligase from Streptococcus pyogenes serotype M1.